Consider the following 328-residue polypeptide: Gonadotropin-releasing hormone receptor (328 aa).

Residues 1-38 (MANSDSPEQNENHCSSINSSIPLTPGSLPTLTLSGKIR) lie on the Extracellular side of the membrane. An N-linked (GlcNAc...) asparagine glycan is attached at Asn18. A helical membrane pass occupies residues 39-58 (VTVTFFLFLLSTIFNTSFLL). Residues 59-77 (KLQNWTQRKEKRKKLSRMK) are Cytoplasmic-facing. The chain crosses the membrane as a helical span at residues 78-97 (LLLKHLTLANLLETLIVMPL). Residues 98–115 (DGMWNITVQWYAGELLCK) are Extracellular-facing. Asn102 carries N-linked (GlcNAc...) asparagine glycosylation. Cys114 and Cys196 are oxidised to a cystine. Residues 116–137 (VLSYLKLFSMYAPAFMMVVISL) form a helical membrane-spanning segment. At 138 to 164 (DRSLAITKPLAVKSNSKLGQFMIGLAW) the chain is on the cytoplasmic side. A helical membrane pass occupies residues 165–184 (LLSSIFAGPQLYIFGMIHLA). Residues 185–212 (DDSGQTEGFSQCVTHCSFPQWWHQAFYN) lie on the Extracellular side of the membrane. The helical transmembrane segment at 213–232 (FFTFSCLFIIPLLIMVICNA) threads the bilayer. Residues 233 to 281 (KIIFTLTRVLHQDPHKLQLNQSKNNIPRARLRTLKMTVAFATSFTVCWT) lie on the Cytoplasmic side of the membrane. Residues 282–300 (PYYVLGIWYWFDPDMVNRV) traverse the membrane as a helical segment. The Extracellular segment spans residues 301–306 (SDPVNH). A helical membrane pass occupies residues 307-326 (FFFLFAFLNPCFNPLIYGYF). Residues 327–328 (SL) are Cytoplasmic-facing.

The protein belongs to the G-protein coupled receptor 1 family.

Its subcellular location is the cell membrane. In terms of biological role, receptor for gonadotropin releasing hormone (GnRH) that mediates the action of GnRH to stimulate the secretion of the gonadotropic hormones luteinizing hormone (LH) and follicle-stimulating hormone (FSH). This receptor mediates its action by association with G-proteins that activate a phosphatidylinositol-calcium second messenger system. In Bos mutus grunniens (Wild yak), this protein is Gonadotropin-releasing hormone receptor (GNRHR).